The sequence spans 370 residues: Aspartate-semialdehyde dehydrogenase (370 aa).

Residues 10–13 (RGMV), 37–38 (TS), and Q73 contribute to the NADP(+) site. R102 serves as a coordination point for phosphate. The Acyl-thioester intermediate role is filled by C135. Residue Q162 participates in substrate binding. NADP(+)-binding positions include 165-166 (SG) and P193. E241 serves as a coordination point for substrate. Residue K244 coordinates phosphate. R268 contacts substrate. The Proton acceptor role is filled by H275. Q351 contributes to the NADP(+) binding site.

Belongs to the aspartate-semialdehyde dehydrogenase family. Homodimer.

It catalyses the reaction L-aspartate 4-semialdehyde + phosphate + NADP(+) = 4-phospho-L-aspartate + NADPH + H(+). Its pathway is amino-acid biosynthesis; L-lysine biosynthesis via DAP pathway; (S)-tetrahydrodipicolinate from L-aspartate: step 2/4. It participates in amino-acid biosynthesis; L-methionine biosynthesis via de novo pathway; L-homoserine from L-aspartate: step 2/3. The protein operates within amino-acid biosynthesis; L-threonine biosynthesis; L-threonine from L-aspartate: step 2/5. Functionally, catalyzes the NADPH-dependent formation of L-aspartate-semialdehyde (L-ASA) by the reductive dephosphorylation of L-aspartyl-4-phosphate. The sequence is that of Aspartate-semialdehyde dehydrogenase (asd) from Pseudomonas aeruginosa (strain ATCC 15692 / DSM 22644 / CIP 104116 / JCM 14847 / LMG 12228 / 1C / PRS 101 / PAO1).